The chain runs to 425 residues: G protein-activated inward rectifier potassium channel 2 (425 aa).

Residues 1–91 lie on the Cytoplasmic side of the membrane; that stretch reads MTMAKLTESM…IFTTLVDLKW (91 aa). Phosphoserine occurs at positions 18 and 25. A helical membrane pass occupies residues 92 to 116; sequence RFNLLIFVMVYTVTWLFFGMIWWLI. Residues 117–140 lie on the Extracellular side of the membrane; it reads AYIRGDMDHIEDPSWTPCVTNLNG. An intramembrane region (helical; Pore-forming) is located at residues 141 to 152; it reads FVSAFLFSIETE. The pore-forming intramembrane region spans 153 to 159; the sequence is TTIGYGY. The short motif at 154–159 is the Selectivity filter element; it reads TIGYGY. The Extracellular portion of the chain corresponds to 160–168; it reads RVITDKCPE. A helical membrane pass occupies residues 169 to 190; it reads GIILLLIQSVLGSIVNAFMVGC. The Cytoplasmic portion of the chain corresponds to 191–425; the sequence is MFVKISQPKK…VANLENESKV (235 aa). Residues 392–425 are disordered; the sequence is NQHAELETEEEEKNPEELTERNGDVANLENESKV. A PDZ-binding motif is present at residues 422–425; that stretch reads ESKV.

Belongs to the inward rectifier-type potassium channel (TC 1.A.2.1) family. KCNJ6 subfamily. In terms of assembly, associates with KCNJ3/GIRK1to form a G-protein-activated heteromultimer pore-forming unit. Associates with KCNJ5/GRIK4 to form a G-protein-activated heteromultimer pore-forming unit. The resulting inward current is much larger. Interacts (via PDZ-binding motif) with SNX27 (via PDZ domain); the interaction is required when endocytosed to prevent degradation in lysosomes and promote recycling to the plasma membrane. Associates with KCNJ3/GRIK1 to form a G-protein-activated heteromultimer pore-forming unit. As to quaternary structure, associates with KCNJ3/GRIK1 to form a G-protein-activated heteromultimer pore-forming unit. The resulting inward current is much larger. As to expression, expressed in the brain.

It is found in the membrane. It carries out the reaction K(+)(in) = K(+)(out). Its activity is regulated as follows. Activated by phosphatidylinositol 4,5 biphosphate (PtdIns(4,5)P2). Its function is as follows. Inward rectifier potassium channels are characterized by a greater tendency to allow potassium to flow into the cell rather than out of it. Their voltage dependence is regulated by the concentration of extracellular potassium; as external potassium is raised, the voltage range of the channel opening shifts to more positive voltages. The inward rectification is mainly due to the blockage of outward current by internal magnesium. This potassium channel is controlled by G proteins. Forms a functional channel in association with KCNJ3/GIRK1. Inward rectifier potassium channels are characterized by a greater tendency to allow potassium to flow into the cell rather than out of it. Their voltage dependence is regulated by the concentration of extracellular potassium; as external potassium is raised, the voltage range of the channel opening shifts to more positive voltages. The inward rectification is mainly due to the blockage of outward current by internal magnesium. This potassium channel is controlled by G proteins. The chain is G protein-activated inward rectifier potassium channel 2 (Kcnj6) from Mus musculus (Mouse).